The primary structure comprises 244 residues: MTDSHVPHPESPAVEEGEERPHRRIKSFVMRAGRMTEGQQRGLDQGLPLYGLSLTDTPVDFDQVFGRSAPRTLEIGFGMGHSLLEMAAAAPEHDFIGVEVHSPGVGALLNGVLTQGLTNVRVYDCDAIEVLNRCVADNSLDRLMLFFPDPWHKSRHHKRRIVQPEFAALVRSKLKVGGVFHMATDWGPYAEYMLEVMSVAPGYRNQAEDNQYVPRPAERPITKFERRGEKLGHGVWDLKFEKVD.

The segment at 1–24 is disordered; it reads MTDSHVPHPESPAVEEGEERPHRR. Residues Glu74, Glu99, Asp126, and Asp149 each contribute to the S-adenosyl-L-methionine site. Asp149 is a catalytic residue. Substrate-binding positions include Lys153, Asp185, and 222–225; that span reads TKFE.

This sequence belongs to the class I-like SAM-binding methyltransferase superfamily. TrmB family.

The enzyme catalyses guanosine(46) in tRNA + S-adenosyl-L-methionine = N(7)-methylguanosine(46) in tRNA + S-adenosyl-L-homocysteine. Its pathway is tRNA modification; N(7)-methylguanine-tRNA biosynthesis. Functionally, catalyzes the formation of N(7)-methylguanine at position 46 (m7G46) in tRNA. The protein is tRNA (guanine-N(7)-)-methyltransferase of Pseudomonas syringae pv. syringae (strain B728a).